We begin with the raw amino-acid sequence, 364 residues long: MSERVVVVGAGVIGLLTARELALAGLRVTLVERGESGREASWAGGGIVSPLYPWRYSPAVTALAHWSQDFYPALGQRLLDETGLDPEVHTVGLYWLDLDDQTEALQWARKHTRPLKEVPIEEAYAAVPGLGAGFQRAVYMSGVANVRNPRLARSLRASLQQFANLELHEQTEVRGWLRDGDRVVGVATSRGEIRGDKVLLAAGAWSGELLKPLGLELPVVPVKGQMILYKCAADFLPRMVLAKGRYAIPRRDGHILIGSTLEHSGFDKTPTDEAQESLRASAAELLPELADMQPVAHWAGLRPGSPEGIPYIGPVPGFDGLWLNTGHYRNGLVLAPASCRLLADLMSGREPIIDPAPYAPAGRL.

FAD is bound by residues 12–13 (VI), 32–33 (ER), 40–41 (AS), 45–47 (GGI), and Val173. Arg302 contributes to the substrate binding site. Residue 327–333 (HYRNGLV) coordinates FAD.

This sequence belongs to the DAO family. ThiO subfamily. Monomer. Requires FAD as cofactor.

The enzyme catalyses glycine + O2 + H2O = glyoxylate + H2O2 + NH4(+). It carries out the reaction sarcosine + O2 + H2O = methylamine + glyoxylate + H2O2. It participates in cofactor biosynthesis; thiamine diphosphate biosynthesis. Catalyzes the oxidation of glycine, leading to glyoxyl imine and hydrogen peroxide as primary products; glyoxyl imine is used for the biosynthesis of the thiazole ring of thiamine. Otherwise, glyoxyl imine is spontaneously hydrolyzed in water to produce glyoxylate and ammonia. Can also use sarcosine (N-methylglycine) as substrate. This is Glycine oxidase from Pseudomonas aeruginosa (strain ATCC 15692 / DSM 22644 / CIP 104116 / JCM 14847 / LMG 12228 / 1C / PRS 101 / PAO1).